Consider the following 370-residue polypeptide: Notoamide biosynthesis cluster protein J (370 aa).

Positions Met1–Ala22 are cleaved as a signal peptide. Residues Asn159, Asn167, Asn192, Asn235, Asn282, Asn340, and Asn346 are each glycosylated (N-linked (GlcNAc...) asparagine).

Part of the gene cluster that mediates the biosynthesis of notoamide, a fungal indole alkaloid that belongs to a family of natural products containing a characteristic bicyclo[2.2.2]diazaoctane core. The first step of notoamide biosynthesis involves coupling of L-proline and L-tryptophan by the bimodular NRPS notE, to produce cyclo-L-tryptophan-L-proline called brevianamide F. The reverse prenyltransferase notF then acts as a deoxybrevianamide E synthase and converts brevianamide F to deoxybrevianamide E via reverse prenylation at C-2 of the indole ring leading to the bicyclo[2.2.2]diazaoctane core. Deoxybrevianamide E is further hydroxylated at C-6 of the indole ring, likely catalyzed by the cytochrome P450 monooxygenase notG, to yield 6-hydroxy-deoxybrevianamide E. 6-hydroxy-deoxybrevianamide E is a specific substrate of the prenyltransferase notC for normal prenylation at C-7 to produce 6-hydroxy-7-prenyl-deoxybrevianamide, also called notoamide S. As the proposed pivotal branching point in notoamide biosynthesis, notoamide S can be diverted to notoamide E through an oxidative pyran ring closure putatively catalyzed by either notH cytochrome P450 monooxygenase or the notD FAD-linked oxidoreductase. This step would be followed by an indole 2,3-epoxidation-initiated pinacol-like rearrangement catalyzed by the notB FAD-dependent monooxygenase leading to the formation of notoamide C and notoamide D. On the other hand notoamide S is converted to notoamide T by notH (or notD), a bifunctional oxidase that also functions as the intramolecular Diels-Alderase responsible for generation of (+)-notoamide T. To generate antipodal (-)-notoaminide T, notH' (or notD') in Aspergillus versicolor is expected to catalyze a Diels-Alder reaction leading to the opposite stereochemistry. The remaining oxidoreductase notD (or notH) likely catalyzes the oxidative pyran ring formation to yield (+)-stephacidin A. The FAD-dependent monooxygenase notI is highly similar to notB and is predicted to catalyze a similar conversion from (+)-stephacidin A to (-)-notoamide B via the 2,3-epoxidation of (+)-stephacidin A followed by a pinacol-type rearrangement. Finally, it remains unclear which enzyme could be responsible for the final hydroxylation steps leading to notoamide A and sclerotiamide. The function of notJ in the notoamide biosynthesis has not been determined yet. This is Notoamide biosynthesis cluster protein J from Aspergillus sp. (strain MF297-2).